The sequence spans 392 residues: Tyrosine--tRNA ligase (392 aa).

A 'HIGH' region motif is present at residues 39–48 (PTAPDIHIGH). The 'KMSKS' region signature appears at 223 to 227 (KMSKS). K226 is an ATP binding site. The 61-residue stretch at 331–391 (IGIAQLLKQA…GKRRFARVVL (61 aa)) folds into the S4 RNA-binding domain.

It belongs to the class-I aminoacyl-tRNA synthetase family. TyrS type 2 subfamily. Homodimer.

Its subcellular location is the cytoplasm. It carries out the reaction tRNA(Tyr) + L-tyrosine + ATP = L-tyrosyl-tRNA(Tyr) + AMP + diphosphate + H(+). Catalyzes the attachment of tyrosine to tRNA(Tyr) in a two-step reaction: tyrosine is first activated by ATP to form Tyr-AMP and then transferred to the acceptor end of tRNA(Tyr). This is Tyrosine--tRNA ligase from Ralstonia nicotianae (strain ATCC BAA-1114 / GMI1000) (Ralstonia solanacearum).